The primary structure comprises 522 residues: Tetratricopeptide repeat and J domain-containing co-chaperone DNJ1 (522 aa).

The N-terminal stretch at 1–22 (MKGFLLVALPVLFLSLSTQVFG) is a signal peptide. 7 TPR repeats span residues 29 to 62 (AAQI…DPTG), 63 to 96 (YANY…NPGF), 97 to 130 (VQAH…KSDS), 142 to 175 (GEAA…GPNS), 210 to 243 (TYLP…DPDS), 256 to 289 (LEKD…LVRF), and 356 to 389 (VDSW…SGRS). The 62-residue stretch at 410–471 (DYYKVLGVPR…ELRQRYDNGD (62 aa)) folds into the J domain. The interval 465–494 (QRYDNGDDPNDPTGGQQHNPFAHHGGGMPF) is disordered.

The protein localises to the endoplasmic reticulum lumen. Endoplasmic reticulum co-chaperone crucial for survival and virulence factor production at elevated temperatures representative of febrile patients during infection. Contributes to virulence in a mouse model of cryptococcosis. With chaperone CNE1, coordinately maintains ER homeostasis and contributes to maintenance of cell wall architecture. This chain is Tetratricopeptide repeat and J domain-containing co-chaperone DNJ1, found in Cryptococcus neoformans var. grubii serotype A (strain H99 / ATCC 208821 / CBS 10515 / FGSC 9487) (Filobasidiella neoformans var. grubii).